Reading from the N-terminus, the 176-residue chain is Large ribosomal subunit protein uL22 (176 aa).

The segment at 113 to 176 (VVESRPSKDQ…EISEAKGGSD (64 aa)) is disordered. A compositionally biased stretch (low complexity) spans 136–152 (SKAAATAPAKKSSASKA). The span at 159-176 (TKAESKTSEISEAKGGSD) shows a compositional bias: basic and acidic residues.

This sequence belongs to the universal ribosomal protein uL22 family. As to quaternary structure, part of the 50S ribosomal subunit.

Functionally, this protein binds specifically to 23S rRNA; its binding is stimulated by other ribosomal proteins, e.g. L4, L17, and L20. It is important during the early stages of 50S assembly. It makes multiple contacts with different domains of the 23S rRNA in the assembled 50S subunit and ribosome. In terms of biological role, the globular domain of the protein is located near the polypeptide exit tunnel on the outside of the subunit, while an extended beta-hairpin is found that lines the wall of the exit tunnel in the center of the 70S ribosome. This is Large ribosomal subunit protein uL22 from Mycobacterium ulcerans (strain Agy99).